The chain runs to 603 residues: Cell division control protein 48 homolog B (603 aa).

ATP-binding positions include 63–70 (GPPGTGKT) and 327–334 (GPPGCSKT).

The protein belongs to the AAA ATPase family.

The protein resides in the nucleus. Its subcellular location is the cytoplasm. It is found in the cytoskeleton. The protein localises to the phragmoplast. Its function is as follows. Probably functions in cell division and growth processes. Interacts with certain SNAREs as part of specialized membrane fusion events where vesicles from the same organelle fuse (homotypic fusion). This Arabidopsis thaliana (Mouse-ear cress) protein is Cell division control protein 48 homolog B (CDC48B).